Here is an 890-residue protein sequence, read N- to C-terminus: Alanine--tRNA ligase (890 aa).

His578, His582, Cys689, and His693 together coordinate Zn(2+).

The protein belongs to the class-II aminoacyl-tRNA synthetase family. Zn(2+) is required as a cofactor.

The protein resides in the cytoplasm. The enzyme catalyses tRNA(Ala) + L-alanine + ATP = L-alanyl-tRNA(Ala) + AMP + diphosphate. Its function is as follows. Catalyzes the attachment of alanine to tRNA(Ala) in a two-step reaction: alanine is first activated by ATP to form Ala-AMP and then transferred to the acceptor end of tRNA(Ala). Also edits incorrectly charged Ser-tRNA(Ala) and Gly-tRNA(Ala) via its editing domain. The protein is Alanine--tRNA ligase of Deinococcus radiodurans (strain ATCC 13939 / DSM 20539 / JCM 16871 / CCUG 27074 / LMG 4051 / NBRC 15346 / NCIMB 9279 / VKM B-1422 / R1).